The sequence spans 373 residues: MHIHMMNRDEHIAKKVEGSISSFSGETSTSSKQIYVNPVTTTGTKSMEDDDVSLSLLYNLSTLHEKVHQIQSLVSFYMVSTNNINQSSGSTSLAVANIGSLVQEIITAASSMLYTCQQLQIGSNNNNNDIDNDQTVDAMVLEFSRQETDPGHDFVQESTNLFGVQERGQISFPDQNLDWYNTETINPKKDKHRSKPSSGSYDILELDVADLLAKYTHYCQICGKGFKRDANLRMHMRAHGDEYKTREALISPTSQDKKGGYSLKKHYYSCPQHGCRWNQRHEKFQPLKSVICAKNHYKRSHCPKMYMCRRCSVKHFSVLSDLRTHEKHCGDIKWVCSCGTKFSRKDKLMSHVSLFLGHVPAHGSSKPPTITLK.

C2H2-type zinc fingers lie at residues 217-239 (HYCQ…MRAH) and 327-362 (KHCG…VPAH).

Expressed at low levels in roots (e.g. root tips and lateral roots), leaves (e.g. at the edge of mature leaves, possibly in hydathodes, and in vascular bundles), flowers (e.g. floral filaments), stems, siliques and cotyledons.

The protein resides in the nucleus. Functionally, probable transcription factor. Together with STOP1, plays a critical role in tolerance to major stress factors in acid soils such as proton H(+) and aluminum ion Al(3+). Required for the expression of genes in response to acidic stress (e.g. ALMT1 and MATE), and Al-activated citrate exudation. The protein is Protein SENSITIVE TO PROTON RHIZOTOXICITY 2 of Arabidopsis thaliana (Mouse-ear cress).